Reading from the N-terminus, the 147-residue chain is Hemoglobin subunit beta (147 aa).

Residues 3-147 (HWTAEEKQLI…VAHALARKYH (145 aa)) form the Globin domain. H64 and H93 together coordinate heme b.

Belongs to the globin family. Heterotetramer of 2 alpha (or alpha-D) and 2 beta chains. In terms of tissue distribution, red blood cells.

In terms of biological role, involved in oxygen transport from the lung to the various peripheral tissues. The beta chain is a component of adult hemoglobin A and D. The chain is Hemoglobin subunit beta (HBB) from Gallus gallus (Chicken).